We begin with the raw amino-acid sequence, 99 residues long: MAHTAFETSLDTLLEEPKMYRVLLLNDDWTAMDFVARILMEVFDKTSDEATAITLKIHNDGKGVCGIYTYDIAELKMQIVSQMAKQHGYPLRVITEEMP.

It belongs to the ClpS family. In terms of assembly, binds to the N-terminal domain of the chaperone ClpA.

Functionally, involved in the modulation of the specificity of the ClpAP-mediated ATP-dependent protein degradation. This Helicobacter hepaticus (strain ATCC 51449 / 3B1) protein is ATP-dependent Clp protease adapter protein ClpS.